The chain runs to 230 residues: A-type ATP synthase subunit D (230 aa).

The segment at Ala204 to Asp230 is disordered. Over residues Glu208–Asp230 the composition is skewed to acidic residues.

Belongs to the V-ATPase D subunit family. As to quaternary structure, has multiple subunits with at least A(3), B(3), C, D, E, F, H, I and proteolipid K(x).

Its subcellular location is the cell membrane. Functionally, component of the A-type ATP synthase that produces ATP from ADP in the presence of a proton gradient across the membrane. The chain is A-type ATP synthase subunit D from Haloarcula marismortui (strain ATCC 43049 / DSM 3752 / JCM 8966 / VKM B-1809) (Halobacterium marismortui).